We begin with the raw amino-acid sequence, 542 residues long: Endonuclease 4 homolog (542 aa).

Disordered stretches follow at residues 89–123 (NEEI…QTSI) and 141–234 (PFFS…ENKF). Low complexity-rich tracts occupy residues 99 to 115 (SKKL…QQSK) and 147 to 170 (NNAS…TTTT). Residues 171 to 206 (TKKRNNKDEENEDDNEEEEEEEEEEEDKKSKKKTTT) are a coiled coil. The segment covering 179–196 (EENEDDNEEEEEEEEEEE) has biased composition (acidic residues). The span at 205–215 (TTTTTTTTTTA) shows a compositional bias: low complexity. Residues 216–227 (YKKKSSPKKKKV) show a composition bias toward basic residues. The Nuclear localization signal signature appears at 222–227 (PKKKKV). Positions 328, 368, 404, 438, 441, 475, 488, 490, and 520 each coordinate Zn(2+).

This sequence belongs to the AP endonuclease 2 family. Requires Zn(2+) as cofactor.

The protein localises to the nucleus. The enzyme catalyses Endonucleolytic cleavage to 5'-phosphooligonucleotide end-products.. Its function is as follows. Plays a role in DNA repair. It cleaves phosphodiester bonds at apurinic or apyrimidinic sites (AP sites) to produce new 5'-ends that are base-free deoxyribose 5-phosphate residues. The sequence is that of Endonuclease 4 homolog (apnA) from Dictyostelium discoideum (Social amoeba).